Consider the following 488-residue polypeptide: Probable cytochrome P450 6u1 (488 aa).

Cys-430 is a heme binding site.

The protein belongs to the cytochrome P450 family. Heme is required as a cofactor.

The protein resides in the endoplasmic reticulum membrane. The protein localises to the microsome membrane. Functionally, may be involved in the metabolism of insect hormones and in the breakdown of synthetic insecticides. The chain is Probable cytochrome P450 6u1 (Cyp6u1) from Drosophila melanogaster (Fruit fly).